The chain runs to 515 residues: MATTLNPSEISDLIKTRIEAVKLSAESRNEGSVTSVSDGIVRIFGLADVMQGEMIELPNNTFALALNLERDSVGAVVLGDYESLREGDVAKTTGRILEVPVGPELLGRVVNALGEPIDGKGPLGATQTAPVERVAPGVIWRKSVDQPVQTGYKSVDAMIPIGRGQRELVIGDRQTGKTALAIDAVINQKGTGIKCVYVAIGQKASTVANIVRKLEENGALAHTVVVAATASESAAMQYISPYAGCTMGEYFMDRGEDALIVYDDLSKQAVAYRQISLLLKRPPGREAYPGDVFYLHSRLLERAARVSEEYVEKFTNGAVTGKTGSLTALPIIETQAGDVSAFVPTNVISITDGQIFLETDLFNAGIRPAVNAGISVSRVGGAAQTKIIKKLSGGIRISLAQYRELAAFAQFASDLDEATRKQLERGQRVTELMKQKQYAPMSIANQALSIYAVNEGYLDDVPVNKLLAFEEGLHAHFANTQGELVSKINSTGGWDNDIEASFKKGIEEFKTTGSW.

171–178 (GDRQTGKT) lines the ATP pocket.

The protein belongs to the ATPase alpha/beta chains family. In terms of assembly, F-type ATPases have 2 components, CF(1) - the catalytic core - and CF(0) - the membrane proton channel. CF(1) has five subunits: alpha(3), beta(3), gamma(1), delta(1), epsilon(1). CF(0) has three main subunits: a(1), b(2) and c(9-12). The alpha and beta chains form an alternating ring which encloses part of the gamma chain. CF(1) is attached to CF(0) by a central stalk formed by the gamma and epsilon chains, while a peripheral stalk is formed by the delta and b chains.

It is found in the cell inner membrane. It catalyses the reaction ATP + H2O + 4 H(+)(in) = ADP + phosphate + 5 H(+)(out). Functionally, produces ATP from ADP in the presence of a proton gradient across the membrane. The alpha chain is a regulatory subunit. This Xanthomonas axonopodis pv. citri (strain 306) protein is ATP synthase subunit alpha.